A 348-amino-acid chain; its full sequence is MAFKIASSPHVRKDSQTSAVMQRVILAALPGLAVQCYFFGWGTFIQVCVAIATALAAEALVLKLRNRPISPTLMDQSAVLTALLIGVAIPPLAPWYLVVIGTVFAIVMVKQLYGGLGQNLFNPAMAAYVLLLVSFPVLMTTWAAPSTLAQSSAGILDAIDVIFSAQGAADFALGIDGVSMATPLDTLKTDLSMGLTADESLKRAIFGGGSTGEGWFWVNLAYLCGGLFLLATKTIRWHISGGLIGALFVCSLFGFGASPDTHASPLFNLFSGATMLAAFFIATDPVTAATSPRGRLLFGAMIGVLIYLIRTFGGYPDGVAFAVLLANLCAPLIDYYIKPRAYGHRGSL.

A run of 3 helical transmembrane segments spans residues 25–45 (ILAALPGLAVQCYFFGWGTFI), 68–88 (PISPTLMDQSAVLTALLIGVA), and 124–144 (AMAAYVLLLVSFPVLMTTWAA). An FMN phosphoryl threonine modification is found at threonine 182. A run of 5 helical transmembrane segments spans residues 211–231 (TGEGWFWVNLAYLCGGLFLLA), 237–257 (WHISGGLIGALFVCSLFGFGA), 263–283 (ASPLFNLFSGATMLAAFFIAT), 296–316 (LLFGAMIGVLIYLIRTFGGYP), and 317–337 (DGVAFAVLLANLCAPLIDYYI).

This sequence belongs to the NqrB/RnfD family. The complex is composed of six subunits: RnfA, RnfB, RnfC, RnfD, RnfE and RnfG. Requires FMN as cofactor.

It is found in the cell inner membrane. Part of a membrane-bound complex that couples electron transfer with translocation of ions across the membrane. The protein is Ion-translocating oxidoreductase complex subunit D of Shewanella amazonensis (strain ATCC BAA-1098 / SB2B).